A 1346-amino-acid chain; its full sequence is Adhesion G protein-coupled receptor F5 (1346 aa).

The first 21 residues, 1–21 (MKSPRRTTLCLMFIVIYSSKA), serve as a signal peptide directing secretion. Residues 22-1006 (ALNWNYESTI…MSPDSPDPSS (985 aa)) lie on the Extracellular side of the membrane. N-linked (GlcNAc...) asparagine glycosylation is found at Asn73, Asn94, Asn106, Asn188, Asn256, Asn272, Asn301, Asn315, Asn328, Asn398, Asn472, Asn487, Asn505, Asn540, Asn627, Asn649, Asn666, Asn820, Asn931, Asn963, and Asn982. The SEA domain occupies 166-273 (LQEDVTLNMR…NSFQAVTINE (108 aa)). Ig-like domains lie at 267–368 (QAVT…IDVM), 369–466 (PIQI…IKVT), and 471–561 (ANLT…KDVI). 2 disulfides stabilise this stretch: Cys293-Cys350 and Cys391-Cys449. A disulfide bond links Cys492 and Cys545. In terms of domain architecture, GAIN-B spans 842-1003 (PPLSFSQTNV…SILMSPDSPD (162 aa)). Intrachain disulfides connect Cys954–Cys985 and Cys973–Cys987. The interval 954 to 1003 (CVFWNFRLANNTGGWDSSGCYVEEGDGDNVTCICDHLTSFSILMSPDSPD) is GPS. Residues 991–1006 (TSFSILMSPDSPDPSS) are tethered agonist. A helical membrane pass occupies residues 1007-1027 (LLGILLDIISYVGVGFSILSL). Residues 1028 to 1053 (AACLVVEAVVWKSVTKNRTSYMRHTC) lie on the Cytoplasmic side of the membrane. A helical membrane pass occupies residues 1054–1074 (IVNIAASLLVANTWFIVVAAI). The Extracellular portion of the chain corresponds to 1075–1090 (QDNRYILCKTACVAAT). A helical membrane pass occupies residues 1091–1111 (FFIHFFYLSVFFWMLTLGLML). The Cytoplasmic portion of the chain corresponds to 1112-1128 (FYRLVFILHETSRSTQK). Residues 1129–1149 (AIAFCLGYGCPLAISVITLGA) form a helical membrane-spanning segment. At 1150 to 1173 (TQPREVYTRKNVCWLNWEDTKALL) the chain is on the extracellular side. Residues 1174–1194 (AFAIPALIIVVVNITITIVVI) traverse the membrane as a helical segment. Over 1195–1220 (TKILRPSIGDKPCKQEKSSLFQISKS) the chain is Cytoplasmic. A helical membrane pass occupies residues 1221 to 1241 (IGVLTPLLGLTWGFGLTTVFP). Residues 1242–1244 (GTN) lie on the Extracellular side of the membrane. The chain crosses the membrane as a helical span at residues 1245–1265 (LVFHIIFAILNVFQGLFILLF). The Cytoplasmic portion of the chain corresponds to 1266–1346 (GCLWDLKVQE…NSSSASSLLN (81 aa)). Residue Thr1300 is modified to Phosphothreonine. Ser1307 carries the post-translational modification Phosphoserine. The disordered stretch occupies residues 1327–1346 (TPEATSSSLENSSSASSLLN). A compositionally biased stretch (low complexity) spans 1329-1346 (EATSSSLENSSSASSLLN).

It belongs to the G-protein coupled receptor 2 family. Adhesion G-protein coupled receptor (ADGR) subfamily. In terms of assembly, homodimer; disulfide-linked. Heterodimer of 2 chains generated by proteolytic processing; the large extracellular N-terminal fragment and the membrane-bound C-terminal fragment predominantly remain associated and non-covalently linked. Fragment generates by the processing enzyme furin remains attached to the extracellular N-terminal fragment. Interacts (via N-terminal extracellular domain) with SFTPD. In terms of processing, highly glycosylated. Proteolytically cleaved at multiple sites: one in the GPS region of the GAIN-B domain (S1 site) and the other in the SEA domain (S2 site). The proteolytic cleavage at S1 site generates an extracellular subunit and a seven-transmembrane subunit. The proteolytic cleavage at S2 site generates a fragment that undergoes proteolytic cleavage by the processing enzyme furin. In terms of tissue distribution, expressed in lung endothelial cells and in alveolar type II (ATII) cells (at protein level). Expressed high levels in subcutaneous adipose tissue in lean individuals and at lower levels in visceral fat. Expression levels in subcutaneous adipose tissue drastically drop in obese individuals.

The protein resides in the cell membrane. With respect to regulation, as an adhesion G protein-coupled receptor (aGPCR) exhibits a large N-terminal extracellular domain containing highly conserved GPCR autoproteolysis-inducing (GAIN) domain. During synthesis, intracellular autoproteolytic processing of nascent chain within the GAIN domain generates a mature protein, consisting of an N-terminal fragment that is non-covalently linked to the C-terminal fragment. The mature protein is routed to the plasma membrane where the N- and C-terminal fragments remain associated, forming the holoreceptor. Dissociation of the aGPCR fragments stimulates G protein signaling through the action of the tethered-peptide agonist stalk that is occluded within the GAIN domain in the holoreceptor form. This dissociation might be induced by ligand binding, such as that of sFNDC4. Its function is as follows. Adhesion G protein-coupled receptor. In alveolar type II (ATII or AT2) cells, required for normal lung surfactant homeostasis. Modulation of both surfactant secretion and uptake by ATII cells is mediated by the downstream activation of GNAQ/GNA11 proteins and may be a consequence of increased cortical F-actin assembly induced by ADGRF5 activation. In the kidney, may play a role in the regulation of acid excretion into the primary urine, possibly by regulating the surface expression of V-ATPase proton pump. As a receptor for soluble FNDC4 (sFNDC4), required for proper systemic glucose tolerance, specifically sensitizing white adipose tissue to insulin. Also plays a role in sFNDC4-induced decrease of local inflammation in white adipose tissue. In Homo sapiens (Human), this protein is Adhesion G protein-coupled receptor F5.